Consider the following 223-residue polypeptide: MRDEIATTVFFVTRLVKKHDKLSKQQIEDFAEKLMTILFETYRSHWHSDCPSKGQAFRCIRINNNQNKDPILERACVESNVDFSHLGLPKEMTIWVDPFEVCCRYGEKNHPFTVASFKGRWEEWELYQQISYAVSRASSDVSSGTSCDEESCSKEPRVIPKVSNPKSIYQVENLKQPFQSWLQIPRKKNVVDGRVGLLGNTYHGSQKHPKCYRPAMHRLDRIL.

This sequence belongs to the BTG family. In terms of assembly, interacts with CNOT7. Interacts with EIF4E. Interacts with CNOT8. Expressed in oocytes after germinal vesicle breakdown. Expressed in testis and in olfactory epithelium.

Adapter protein that bridges CNOT7, a catalytic subunit of the CCR4-NOT complex, to EIF4E. Facilitates maternal mRNAs decay during the maturation of oocytes and in the fertilized egg, and is required for the maternal-zygotic transition (MZT), zygotic cleavage and initiation of embryonic development. The sequence is that of Protein BTG4 (BTG4) from Homo sapiens (Human).